The primary structure comprises 165 residues: Cytochrome c-type biogenesis protein CcmE (165 aa).

The Cytoplasmic portion of the chain corresponds to Met-1 to Arg-7. Residues Leu-8–Ala-28 traverse the membrane as a helical; Signal-anchor for type II membrane protein segment. Residues Met-29 to Arg-165 are Periplasmic-facing. Heme contacts are provided by His-122 and Tyr-126. The span at Gln-138–Pro-149 shows a compositional bias: basic and acidic residues. The interval Gln-138–Arg-165 is disordered. The segment covering Gly-153–Arg-165 has biased composition (low complexity).

This sequence belongs to the CcmE/CycJ family.

The protein resides in the cell inner membrane. Functionally, heme chaperone required for the biogenesis of c-type cytochromes. Transiently binds heme delivered by CcmC and transfers the heme to apo-cytochromes in a process facilitated by CcmF and CcmH. This Rhodopseudomonas palustris (strain HaA2) protein is Cytochrome c-type biogenesis protein CcmE.